Reading from the N-terminus, the 214-residue chain is Protein FAM167A (214 aa).

Disordered stretches follow at residues 1–26 and 59–108; these read MSVP…PDDH and PFPR…LSTG. Positions 118–156 form a coiled coil; that stretch reads EAIAWLRKELTEMRLQDQQLARQLMRLRGDINKLKIEHT.

Belongs to the FAM167 (SEC) family. In terms of tissue distribution, expressed in skin, including primary keratinocytes, spleen, kidney, leukocytes, testis, lung, small intestine and prostate.

The chain is Protein FAM167A (FAM167A) from Homo sapiens (Human).